The primary structure comprises 263 residues: MVQCSNNLLGILNFFTFLLSIPILSAGIWLGKNAATECERFLDKPMVVLGIFLMFVSIAGLVGACCRVSCLLWLYLFAMFLLILLGFCFTIFAFAVTNRGAGEVISDRGYKEYHVADYSNWLQKRVNNAKNWERIRSCLMYSDVCSTYRTRYASINVEDFYKSNLNALQSGCCKPSNDCNFTYVNPTTWTKTPGPYKNEDCNVWDNKPGTLCYDCEACKAGLLDNIKNSWKKVAKVNIVFLIFLIIVYSVGCCAFRNNRKRSW.

Residues 1-7 (MVQCSNN) lie on the Cytoplasmic side of the membrane. Residues 8 to 28 (LLGILNFFTFLLSIPILSAGI) traverse the membrane as a helical segment. The Extracellular segment spans residues 29–45 (WLGKNAATECERFLDKP). A helical transmembrane segment spans residues 46–66 (MVVLGIFLMFVSIAGLVGACC). Over 67–75 (RVSCLLWLY) the chain is Cytoplasmic. The chain crosses the membrane as a helical span at residues 76–96 (LFAMFLLILLGFCFTIFAFAV). Residues 97 to 234 (TNRGAGEVIS…NIKNSWKKVA (138 aa)) lie on the Extracellular side of the membrane. A glycan (N-linked (GlcNAc...) asparagine) is linked at asparagine 180. A helical membrane pass occupies residues 235-255 (KVNIVFLIFLIIVYSVGCCAF). Residues 256–263 (RNNRKRSW) lie on the Cytoplasmic side of the membrane.

It belongs to the tetraspanin (TM4SF) family.

The protein resides in the membrane. Its function is as follows. May be involved in the regulation of cell differentiation. In Arabidopsis thaliana (Mouse-ear cress), this protein is Tetraspanin-7 (TET7).